The sequence spans 481 residues: UDP-N-acetylmuramoyl-L-alanyl-D-glutamate--L-lysine ligase (481 aa).

Ser-42 is a UDP-N-acetyl-alpha-D-muramoyl-L-alanyl-D-glutamate binding site. 118-124 (GTKGKTT) is a binding site for ATP. Residues 160–161 (TT), Ser-187, and Arg-195 contribute to the UDP-N-acetyl-alpha-D-muramoyl-L-alanyl-D-glutamate site. At Lys-229 the chain carries N6-carboxylysine. Positions 404–407 (DDPN) match the L-lysine recognition motif motif.

This sequence belongs to the MurCDEF family. MurE subfamily. Carboxylation is probably crucial for Mg(2+) binding and, consequently, for the gamma-phosphate positioning of ATP.

The protein localises to the cytoplasm. It catalyses the reaction UDP-N-acetyl-alpha-D-muramoyl-L-alanyl-D-glutamate + L-lysine + ATP = UDP-N-acetyl-alpha-D-muramoyl-L-alanyl-gamma-D-glutamyl-L-lysine + ADP + phosphate + H(+). It participates in cell wall biogenesis; peptidoglycan biosynthesis. Its function is as follows. Catalyzes the addition of L-lysine to the nucleotide precursor UDP-N-acetylmuramoyl-L-alanyl-D-glutamate (UMAG) in the biosynthesis of bacterial cell-wall peptidoglycan. This is UDP-N-acetylmuramoyl-L-alanyl-D-glutamate--L-lysine ligase from Streptococcus sanguinis (strain SK36).